A 305-amino-acid chain; its full sequence is UDP-3-O-acyl-N-acetylglucosamine deacetylase (305 aa).

Residues histidine 78, histidine 235, and aspartate 239 each coordinate Zn(2+). Histidine 262 (proton donor) is an active-site residue.

Belongs to the LpxC family. The cofactor is Zn(2+).

The enzyme catalyses a UDP-3-O-[(3R)-3-hydroxyacyl]-N-acetyl-alpha-D-glucosamine + H2O = a UDP-3-O-[(3R)-3-hydroxyacyl]-alpha-D-glucosamine + acetate. It participates in glycolipid biosynthesis; lipid IV(A) biosynthesis; lipid IV(A) from (3R)-3-hydroxytetradecanoyl-[acyl-carrier-protein] and UDP-N-acetyl-alpha-D-glucosamine: step 2/6. Functionally, catalyzes the hydrolysis of UDP-3-O-myristoyl-N-acetylglucosamine to form UDP-3-O-myristoylglucosamine and acetate, the committed step in lipid A biosynthesis. The protein is UDP-3-O-acyl-N-acetylglucosamine deacetylase of Geobacter sp. (strain M21).